The following is a 392-amino-acid chain: Bifunctional enzyme Fae/Hps (392 aa).

The segment at Met1 to Ile161 is formaldehyde-activating enzyme. Residue His17 is the Proton donor of the active site. Residues Asp19, Leu48, Lys66, Thr68, and Gln83 each coordinate substrate. Residues Met162–Phe392 form a 3-hexulose-6-phosphate synthase region.

It in the N-terminal section; belongs to the formaldehyde-activating enzyme family. In the C-terminal section; belongs to the HPS/KGPDC family. HPS subfamily.

The catalysed reaction is 5,6,7,8-tetrahydromethanopterin + formaldehyde = 5,10-methylenetetrahydromethanopterin + H2O. It carries out the reaction D-ribulose 5-phosphate + formaldehyde = D-arabino-hex-3-ulose 6-phosphate. It participates in carbohydrate biosynthesis; D-ribose 5-phosphate biosynthesis. Its function is as follows. Catalyzes the condensation of formaldehyde with tetrahydromethanopterin (H(4)MPT) to 5,10-methylenetetrahydromethanopterin. In terms of biological role, catalyzes the reversible formation of ribulose-5-phosphate and formaldehyde from 3-hexulose-6-phosphate. This Methanosarcina acetivorans (strain ATCC 35395 / DSM 2834 / JCM 12185 / C2A) protein is Bifunctional enzyme Fae/Hps.